The following is a 614-amino-acid chain: Probable zinc transporter protein DDB_G0269332 (614 aa).

Disordered regions lie at residues 1–103 (MSDI…LPHL) and 115–178 (SSYN…NNEF). The Cytoplasmic segment spans residues 1 to 203 (MSDINSNSYD…NLNRDSDAKK (203 aa)). Over residues 17–64 (QHQQESQYHPQQQQQQQQQQQQQQEYYNQQHQQESQYQQQSPPQQQYD) the composition is skewed to low complexity. Positions 80–92 (GHGRSHNSGHGHS) are enriched in basic residues. Positions 121 to 176 (NNSGDISNSNNNNNNNNQYNYNNNNNNNNYNNNINNNQFNSSVYNNNNNNNNNNNN) are enriched in low complexity. A helical transmembrane segment spans residues 204 to 224 (LAAWISVMLVFTIYEIFYGAY). Over 225-233 (LESLGLVSD) the chain is Extracellular. A helical transmembrane segment spans residues 234 to 254 (GFHALFDCIGMGIALLAMLVG). The Cytoplasmic portion of the chain corresponds to 255–270 (KRGISNQEYTYGYDRW). The chain crosses the membrane as a helical span at residues 271–291 (EVLGTFSNGCFLLFVSFFLFL). Residues 292 to 306 (ESIERLLEPPHIHNH) are Extracellular-facing. A helical membrane pass occupies residues 307-327 (GRVMSLATISLIINIVGVLFF). Residues 328–351 (KQKSNERKQQSSIRSENLLTISHH) lie on the Cytoplasmic side of the membrane. A helical transmembrane segment spans residues 352–372 (ILVDSCTSLGVILSSLVGQAF). Topologically, residues 373-377 (GLEIS) are extracellular. Residues 378–398 (DSLISIIIACIIVYNALPICI) form a helical membrane-spanning segment. At 399–614 (KTSAILLQTT…NSSHSHAHNH (216 aa)) the chain is on the cytoplasmic side. The tract at residues 483 to 614 (EGKHNSHSHG…NSSHSHAHNH (132 aa)) is disordered. Basic residues-rich tracts occupy residues 487 to 499 (NSHS…HHPH) and 507 to 523 (SHNH…HGHS). Residues 525 to 535 (GGNDDHEHGEN) show a composition bias toward basic and acidic residues. The span at 548 to 567 (VQPTSPFSSHYTDIHSNNTP) shows a compositional bias: polar residues. Acidic residues predominate over residues 575-585 (QDDEDDEDDYD). The segment covering 586 to 599 (HDEHHHDHDHDEHH) has biased composition (basic and acidic residues). Over residues 600 to 614 (HGHSHNSSHSHAHNH) the composition is skewed to basic residues.

This sequence belongs to the cation diffusion facilitator (CDF) transporter (TC 2.A.4) family. SLC30A subfamily.

The protein resides in the membrane. May be involved in zinc transport from the cytoplasm to either intracellular organelles or extracellular spaces. The chain is Probable zinc transporter protein DDB_G0269332 from Dictyostelium discoideum (Social amoeba).